A 214-amino-acid polypeptide reads, in one-letter code: Type 4 apparatus protein DotN (214 aa).

4 residues coordinate Zn(2+): Cys-52, Cys-55, Cys-84, and Cys-87.

In terms of assembly, the T4BSS is a complex nanomachine composed of several subcomplexes. This subunit is part of the Type IV Coupling Complex (T4CC), a subcomplex composed of the DotLMNYZ core and the IcmSW-LvgA adapter subunits, linked by the C-terminal tail of DotL. Six DotLMNYZ hetero-pentameric units may assemble into a hexameric nanomachine, forming an inner membrane channel for effectors to pass through. Interacts directly with DotL. Interacts with DotZ.

The protein localises to the cytoplasm. Functionally, component of the Dot/Icm type IVB secretion system (T4BSS), which is used to inject bacterial effector proteins into eukaryotic host cells. Part of a subcomplex which recruits effector proteins and delivers them to the core transmembrane subcomplex. The chain is Type 4 apparatus protein DotN from Legionella pneumophila subsp. pneumophila (strain Philadelphia 1 / ATCC 33152 / DSM 7513).